Consider the following 1338-residue polypeptide: Centrosomal P4.1-associated protein (1338 aa).

2 disordered regions span residues 78-99 (QKLE…HTGF) and 190-211 (GLSL…TTTG). Phosphoserine is present on residues Ser260 and Ser317. Residues 320–395 (VANIEERPIK…FTNAKSKFQK (76 aa)) are alpha/beta-tubulin binding. Disordered regions lie at residues 387–415 (TNAK…PLFK), 437–480 (PILK…QTGK), and 522–552 (QGKD…ESES). Positions 401–410 (LVTNQSTSED) are enriched in polar residues. Position 541 is a phosphoserine (Ser541). The segment covering 542 to 551 (PIRETMKESE) has biased composition (basic and acidic residues). Ser590 and Ser596 each carry phosphoserine; by PLK2. 3 disordered regions span residues 612-790 (HRMS…LSMS), 846-903 (VKRG…DNAR), and 1088-1158 (TQVE…HPDG). The span at 636–651 (NRSEDLDHTAREKESE) shows a compositional bias: basic and acidic residues. Polar residues predominate over residues 680–690 (QKSTSENQTEW). Over residues 718–765 (STEDRERGISSREDSPQVCDDKGPFKDTRTQEDKRRDVDLDLSDKDYS) the composition is skewed to basic and acidic residues. A Phosphoserine modification is found at Ser760. The segment covering 781–790 (PSRSSSLSMS) has biased composition (low complexity). Positions 896–1338 (QPPGDNARSQ…EGNVLMDTEL (443 aa)) are interaction with STIL.

Belongs to the TCP10 family. As to quaternary structure, forms homodimers. Associates with microtubules plus ends; binds to beta-tubulin subunits exposed on microtubule outer surface at its distal tip; also associates with microtubule lattice. Associated with the gamma-tubulin complex. Interacts with the head domain of EPB41. Interacts with LYST. Interacts with CEP152 (via C-terminus). Interacts with STIL. Forms a complex with STIL and SASS6. Post-translationally, phosphorylation at Ser-590 and Ser-596 by PLK2 is required for procentriole formation and centriole elongation. Phosphorylation by PLK2 oscillates during the cell cycle: it increases at G1/S transition and decreases during the exit from mitosis. Phosphorylation at Ser-596 is also mediated by PLK4 but is not a critical step in PLK4 function in procentriole assembly.

The protein resides in the cytoplasm. It localises to the cytoskeleton. Its subcellular location is the microtubule organizing center. The protein localises to the centrosome. It is found in the centriole. Functionally, plays an important role in cell division and centrosome function by participating in centriole duplication. Inhibits microtubule nucleation from the centrosome. Involved in the regulation of slow processive growth of centriolar microtubules. Acts as microtubule plus-end tracking protein that stabilizes centriolar microtubules and inhibits microtubule polymerization and extension from the distal ends of centrioles. Required for centriole elongation and for STIL-mediated centriole amplification. Required for the recruitment of CEP295 to the proximal end of new-born centrioles at the centriolar microtubule wall during early S phase in a PLK4-dependent manner. May be involved in the control of centriolar-microtubule growth by acting as a regulator of tubulin release. This chain is Centrosomal P4.1-associated protein (CPAP), found in Pan troglodytes (Chimpanzee).